We begin with the raw amino-acid sequence, 87 residues long: Translation initiation factor IF-1 2 (87 aa).

The region spanning 1 to 72 (MAKEEVIEME…TKGRINFRHK (72 aa)) is the S1-like domain.

It belongs to the IF-1 family. Component of the 30S ribosomal translation pre-initiation complex which assembles on the 30S ribosome in the order IF-2 and IF-3, IF-1 and N-formylmethionyl-tRNA(fMet); mRNA recruitment can occur at any time during PIC assembly.

It localises to the cytoplasm. In terms of biological role, one of the essential components for the initiation of protein synthesis. Stabilizes the binding of IF-2 and IF-3 on the 30S subunit to which N-formylmethionyl-tRNA(fMet) subsequently binds. Helps modulate mRNA selection, yielding the 30S pre-initiation complex (PIC). Upon addition of the 50S ribosomal subunit IF-1, IF-2 and IF-3 are released leaving the mature 70S translation initiation complex. This is Translation initiation factor IF-1 2 from Thiobacillus denitrificans (strain ATCC 25259 / T1).